A 357-amino-acid polypeptide reads, in one-letter code: Transactivator protein DR7 (357 aa).

The tract at residues 107–187 (LVGKDGAVYV…LLTVGGLCQT (81 aa)) is interaction with host p53.

This sequence belongs to the herpesviridae US22 family. Interacts with host p53 and inhibits p53-activated transcription.

In terms of biological role, involved in transactivation. Displays transforming activity. The chain is Transactivator protein DR7 (DR7L) from Homo sapiens (Human).